Here is an 81-residue protein sequence, read N- to C-terminus: Adipogenin (81 aa).

The helical transmembrane segment at 16–36 (FLASWLCLPVGLLLFLLIVWL) threads the bilayer.

It belongs to the adipogenin family.

Its subcellular location is the membrane. The protein localises to the nucleus. Plays a role in stimulating adipocyte differentiation and development. The chain is Adipogenin from Sus scrofa (Pig).